Consider the following 121-residue polypeptide: Putative iron-sulfur cluster insertion protein ErpA 1 (121 aa).

Iron-sulfur cluster-binding residues include Cys49, Cys113, and Cys115.

The protein belongs to the HesB/IscA family. As to quaternary structure, homodimer. Requires iron-sulfur cluster as cofactor.

Required for insertion of 4Fe-4S clusters. In Polaromonas naphthalenivorans (strain CJ2), this protein is Putative iron-sulfur cluster insertion protein ErpA 1.